Consider the following 375-residue polypeptide: F-box/kelch-repeat protein At4g39240 (375 aa).

A compositionally biased stretch (low complexity) spans 1–15; the sequence is MPFSAASSSSVSSIA. The interval 1–27 is disordered; it reads MPFSAASSSSVSSIAEEPPPKKQHDPS. The F-box domain maps to 31 to 77; that stretch reads SSYLLLLPDEIILNCLARLPKCYYPVISLVSKTFRRLIASPEIYVER. Kelch repeat units lie at residues 140-186, 187-232, and 275-321; these read EIYV…FFDG, KLYV…RSFA, and KIYT…GNLA.

The chain is F-box/kelch-repeat protein At4g39240 from Arabidopsis thaliana (Mouse-ear cress).